The chain runs to 357 residues: Probable cinnamyl alcohol dehydrogenase (357 aa).

C47 lines the Zn(2+) pocket. S49 lines the NADP(+) pocket. The Zn(2+) site is built by H69, E70, C100, C103, C106, C114, and C163. NADP(+)-binding positions include T167, 188–193 (GLGGVG), 211–216 (SSSDKK), T251, G275, and 298–300 (SFI).

The protein belongs to the zinc-containing alcohol dehydrogenase family. As to quaternary structure, homodimer. The cofactor is Zn(2+).

It catalyses the reaction (E)-cinnamyl alcohol + NADP(+) = (E)-cinnamaldehyde + NADPH + H(+). It carries out the reaction (E)-coniferol + NADP(+) = (E)-coniferaldehyde + NADPH + H(+). The enzyme catalyses (E)-sinapyl alcohol + NADP(+) = (E)-sinapaldehyde + NADPH + H(+). The catalysed reaction is (E)-4-coumaroyl alcohol + NADP(+) = (E)-4-coumaraldehyde + NADPH + H(+). It catalyses the reaction (E)-caffeyl alcohol + NADP(+) = (E)-caffeyl aldehyde + NADPH + H(+). Its pathway is aromatic compound metabolism; phenylpropanoid biosynthesis. In terms of biological role, involved in lignin biosynthesis. Catalyzes the final step specific for the production of lignin monomers. Catalyzes the NADPH-dependent reduction of coniferaldehyde, 5-hydroxyconiferaldehyde, sinapaldehyde, 4-coumaraldehyde and caffeyl aldehyde to their respective alcohols. The protein is Probable cinnamyl alcohol dehydrogenase (CAD) of Pinus radiata (Monterey pine).